The following is a 309-amino-acid chain: Elongation factor Ts (309 aa).

The involved in Mg(2+) ion dislocation from EF-Tu stretch occupies residues 82–85; that stretch reads TDFV.

The protein belongs to the EF-Ts family.

It is found in the cytoplasm. Functionally, associates with the EF-Tu.GDP complex and induces the exchange of GDP to GTP. It remains bound to the aminoacyl-tRNA.EF-Tu.GTP complex up to the GTP hydrolysis stage on the ribosome. The sequence is that of Elongation factor Ts from Rickettsia typhi (strain ATCC VR-144 / Wilmington).